Here is a 270-residue protein sequence, read N- to C-terminus: Surfeit locus protein 4 homolog (270 aa).

Helical transmembrane passes span 65-85 (FLAT…CGMV), 93-113 (IAVG…SILW), 115-135 (FQFL…LAEA), 178-198 (LSVW…LVVL), 206-226 (ALIL…WWTI), and 243-263 (TLSV…GVSM). The Di-lysine motif motif lies at 267 to 270 (KKKW).

Belongs to the SURF4 family.

Its subcellular location is the endoplasmic reticulum membrane. In terms of biological role, endoplasmic reticulum cargo receptor that mediates the export of lipoproteins by recruiting cargos into COPII vesicles to facilitate their secretion. This is Surfeit locus protein 4 homolog from Drosophila melanogaster (Fruit fly).